The following is a 289-amino-acid chain: 2-dehydro-3-deoxyphosphooctonate aldolase (289 aa).

Belongs to the KdsA family.

Its subcellular location is the cytoplasm. It catalyses the reaction D-arabinose 5-phosphate + phosphoenolpyruvate + H2O = 3-deoxy-alpha-D-manno-2-octulosonate-8-phosphate + phosphate. It functions in the pathway carbohydrate biosynthesis; 3-deoxy-D-manno-octulosonate biosynthesis; 3-deoxy-D-manno-octulosonate from D-ribulose 5-phosphate: step 2/3. It participates in bacterial outer membrane biogenesis; lipopolysaccharide biosynthesis. In Cupriavidus necator (strain ATCC 17699 / DSM 428 / KCTC 22496 / NCIMB 10442 / H16 / Stanier 337) (Ralstonia eutropha), this protein is 2-dehydro-3-deoxyphosphooctonate aldolase.